A 269-amino-acid chain; its full sequence is tRNA pseudouridine synthase A (269 aa).

Asp-55 (nucleophile) is an active-site residue. Residue Tyr-111 participates in substrate binding.

This sequence belongs to the tRNA pseudouridine synthase TruA family.

The enzyme catalyses uridine(38/39/40) in tRNA = pseudouridine(38/39/40) in tRNA. In terms of biological role, formation of pseudouridine at positions 38, 39 and 40 in the anticodon stem and loop of transfer RNAs. The chain is tRNA pseudouridine synthase A from Methanosarcina barkeri (strain Fusaro / DSM 804).